The primary structure comprises 84 residues: Insulin-like peptide 05 (84 aa).

Residues 1–22 form the signal peptide; that stretch reads MKTPILFVVVVAVLIVTDSAEG. A propeptide spanning residues 23–37 is cleaved from the precursor; sequence FKGKANSFLKPLQRR. 3 disulfides stabilise this stretch: Cys-43-Cys-48, Cys-44-Cys-73, and Cys-57-Cys-61.

Belongs to the insulin family.

It is found in the secreted. In terms of biological role, insulin decreases blood glucose concentration. May have evolved to activate insulin receptors (INSR) in vertebrates. Molecular docking studies reveals unique interaction with the human insulin receptor. In vivo, insulin-like peptide injection reduces blood glucose levels in two models of zebrafish diabetes (streptozotocin- and glucose-induced). Also shorter swimming distance of zebrafish larvae, an effect which is not observed with human insulin. This Exaiptasia diaphana (Tropical sea anemone) protein is Insulin-like peptide 05.